A 415-amino-acid polypeptide reads, in one-letter code: Autophagy-related protein 19 (415 aa).

Positions 21–28 (YDECNKFQ) are ATG11-binding. Over residues 126–135 (CREDAHEDPV) the composition is skewed to basic and acidic residues. A disordered region spans residues 126–150 (CREDAHEDPVSPKAGSEEEISPNST). Phosphoserine is present on residues Ser136 and Ser141. Residues 157-187 (RECLDNFMKQLLKLEESLNKLELEQKVTNKE) are a coiled coil. Residues Lys213 and Lys216 each participate in a glycyl lysine isopeptide (Lys-Gly) (interchain with G-Cter in ubiquitin) cross-link. A Phosphoserine modification is found at Ser243. Residues 254 to 367 (VEPPNERSLQ…LRPPSRLSAE (114 aa)) form an AMS1-binding region. The tract at residues 406 to 415 (NEKALTWEEL) is ATG8-binding. The WXXL motif lies at 412–415 (WEEL).

As to quaternary structure, interacts with the vacuolar aminopeptidase 1 (LAP4) precursor and mature forms. Also interacts with AMS1, APE4, ATG8 ATG11, and UBP3. In terms of processing, polyubiquitinated at Lys-213 and Lys-216. Deubiquitination by UBP3 is required for full activity of ATG19.

The protein localises to the preautophagosomal structure membrane. Cargo-receptor protein involved in the cytoplasm to vacuole transport (Cvt) and in autophagy. Recognizes cargo proteins, such as APE4, LAP3, LAP4 and AMS1 and delivers them to the pre-autophagosomal structure for eventual engulfment by the autophagosome and targeting to the vacuole. Involved in the organization of the preautophagosomal structure (PAS). ATG19 association with cargo protein is required to localize ATG11 to the PAS. Also involved in endoplasmic reticulum-specific autophagic process, in selective removal of ER-associated degradation (ERAD) substrates, and is essential for the survival of cells subjected to severe ER stress. Also plays a role in regulation of filamentous growth. The chain is Autophagy-related protein 19 (ATG19) from Saccharomyces cerevisiae (strain YJM789) (Baker's yeast).